The chain runs to 422 residues: Glyceraldehyde-3-phosphate dehydrogenase GAPCP1, chloroplastic (422 aa).

Residues 1–69 (MAFSSLLRSA…NARSVQPIKA (69 aa)) constitute a chloroplast transit peptide. Polar residues predominate over residues 50–63 (SGISSSLQNGNARS). The disordered stretch occupies residues 50 to 84 (SGISSSLQNGNARSVQPIKATATEVPSAVRRSSSS). Thr-70 is subject to N-acetylthreonine. NAD(+) contacts are provided by residues 96–97 (RI), Asp-118, and Arg-164. D-glyceraldehyde 3-phosphate is bound by residues 235 to 237 (SCT), Thr-266, 295 to 296 (TG), and Arg-318. Catalysis depends on Cys-236, which acts as the Nucleophile. Residue Asn-400 coordinates NAD(+).

The protein belongs to the glyceraldehyde-3-phosphate dehydrogenase family. Homotetramer. Expressed in shoot and root vasculature, leaf veins and vascular tissue of flowers and siliques.

The protein resides in the plastid. It localises to the chloroplast stroma. The catalysed reaction is D-glyceraldehyde 3-phosphate + phosphate + NAD(+) = (2R)-3-phospho-glyceroyl phosphate + NADH + H(+). In terms of biological role, involved in plastidial glycolytic pathway and plays a specific role in glycolytic energy production in non-green plastids and chloroplasts. Essential for breakdown of starch to form sucrose for export to non-photosynthetic tissues, and to generate primary metabolites for anabolic pathways such as fatty acid and amino acid synthesis. Plays an important role in plant development by providing substrates for the phosphorylated pathway of serine biosynthesis in roots. Plays a crucial role in pollen development. Functionally redundant with GAPCP2. This is Glyceraldehyde-3-phosphate dehydrogenase GAPCP1, chloroplastic (GAPCP1) from Arabidopsis thaliana (Mouse-ear cress).